The following is a 100-amino-acid chain: Urease subunit gamma (100 aa).

This sequence belongs to the urease gamma subunit family. As to quaternary structure, heterotrimer of UreA (gamma), UreB (beta) and UreC (alpha) subunits. Three heterotrimers associate to form the active enzyme.

It is found in the cytoplasm. The catalysed reaction is urea + 2 H2O + H(+) = hydrogencarbonate + 2 NH4(+). Its pathway is nitrogen metabolism; urea degradation; CO(2) and NH(3) from urea (urease route): step 1/1. The polypeptide is Urease subunit gamma (Thermosynechococcus vestitus (strain NIES-2133 / IAM M-273 / BP-1)).